A 383-amino-acid chain; its full sequence is uncharacterized protein (383 aa).

Disordered stretches follow at residues 27 to 66 (ENNN…NKKP) and 242 to 281 (LITT…ITRR). Low complexity-rich tracts occupy residues 28–63 (NNNT…NNNN) and 242–275 (LITT…KSSS).

This is an uncharacterized protein from Dictyostelium discoideum (Social amoeba).